The primary structure comprises 208 residues: MGGKWSKRMSGWSAVRERMKRAEPAEPAADGVGAVSRDLEKHGAITSSNTAANNADCAWLEAQEDEDVGFPVRPQVPLRPMTYKAALDLSHFLKEKGGLEGLIYSQKRQDILDLWIHHTQGYFPDWQNYTPGPGIRYPLTFGWCFKLVPVDPDYVEEANAGENNSLLHPMSQHGMDDPEKEVLVWRFDSRLAFHHMARELHPEYYKDC.

The segment at 1–33 (MGGKWSKRMSGWSAVRERMKRAEPAEPAADGVG) is disordered. Residue glycine 2 is the site of N-myristoyl glycine; by host attachment. Serine 6 bears the Phosphoserine; by host mark. Residues 15 to 24 (VRERMKRAEP) are compositionally biased toward basic and acidic residues. The segment at 64 to 67 (EDED) is acidic; interacts with host PACS1 and PACS2; stabilizes the interaction of NEF/MHC-I with host AP1M1; necessary for MHC-I internalization. The SH3-binding; interaction with Src family tyrosine kinases stretch occupies residues 71–80 (PVRPQVPLRP). The short motif at 74–77 (PQVP) is the PxxP; stabilizes the interaction of NEF/MHC-I with host AP1M1; necessary for MHC-I internalization element. Residues 110-126 (DILDLWIHHTQGYFPDW) form a mediates dimerization, Nef-PTE1 interaction region. The segment at 150–182 (VDPDYVEEANAGENNSLLHPMSQHGMDDPEKEV) is binding to ATP6V1H. The Dileucine internalization motif; necessary for CD4 internalization motif lies at 166-167 (LL). The short motif at 176–177 (DD) is the Diacidic; necessary for CD4 internalization element.

The protein belongs to the lentivirus primate group Nef protein family. As to quaternary structure, monomer; cytosolic form. Homodimer; membrane bound form. Interacts with Nef associated p21-activated kinase (PAK2); this interaction activates PAK2. Associates with the Nef-MHC-I-AP1 complex; this complex is required for MHC-I internalization. Interacts (via C-terminus) with host PI3-kinase. Interacts with host PACS1; this interaction seems to be weak. Interacts with host PACS2. Interacts with host LCK and MAPK3; these interactions inhibit the kinase activity of the latter. Interacts with host ATP6V1H; this interaction may play a role in CD4 endocytosis. Associates with the CD4-Nef-AP2 complex; this complex is required for CD4 internalization. Interacts with host AP2 subunit alpha and AP2 subunit sigma2. Interacts with TCR-zeta chain; this interaction up-regulates the Fas ligand (FasL) surface expression. Interacts with host HCK, LYN, and SRC; these interactions activate the Src family kinases. Interacts with MAP3K5; this interaction inhibits the Fas and TNFR-mediated death signals. Interacts with beta-COP and PTE1. Interacts with human RACK1; this increases Nef phosphorylation by PKC. Interacts with TP53; this interaction decreases the half-life of TP53, protecting the infected cell against p53-mediated apoptosis. Post-translationally, the virion-associated Nef proteins are cleaved by the viral protease to release the soluble C-terminal core protein. Nef is probably cleaved concomitantly with viral structural proteins on maturation of virus particles. In terms of processing, myristoylated. Phosphorylated on serine residues, probably by host PKCdelta and theta.

Its subcellular location is the host cell membrane. The protein resides in the virion. It is found in the secreted. It localises to the host Golgi apparatus membrane. Its function is as follows. Factor of infectivity and pathogenicity, required for optimal virus replication. Alters numerous pathways of T-lymphocyte function and down-regulates immunity surface molecules in order to evade host defense and increase viral infectivity. Alters the functionality of other immunity cells, like dendritic cells, monocytes/macrophages and NK cells. Functionally, in infected CD4(+) T-lymphocytes, down-regulates the surface MHC-I, mature MHC-II, CD4, CD28, CCR5 and CXCR4 molecules. Mediates internalization and degradation of host CD4 through the interaction of with the cytoplasmic tail of CD4, the recruitment of AP-2 (clathrin adapter protein complex 2), internalization through clathrin coated pits, and subsequent transport to endosomes and lysosomes for degradation. Diverts host MHC-I molecules to the trans-Golgi network-associated endosomal compartments by an endocytic pathway to finally target them for degradation. MHC-I down-regulation may involve AP-1 (clathrin adapter protein complex 1) or possibly Src family kinase-ZAP70/Syk-PI3K cascade recruited by PACS2. In consequence infected cells are masked for immune recognition by cytotoxic T-lymphocytes. Decreasing the number of immune receptors also prevents reinfection by more HIV particles (superinfection). Down-regulates host SERINC3 and SERINC5 thereby excluding these proteins from the viral particles. Virion infectivity is drastically higher when SERINC3 or SERINC5 are excluded from the viral envelope, because these host antiviral proteins impair the membrane fusion event necessary for subsequent virion penetration. In terms of biological role, bypasses host T-cell signaling by inducing a transcriptional program nearly identical to that of anti-CD3 cell activation. Interaction with TCR-zeta chain up-regulates the Fas ligand (FasL). Increasing surface FasL molecules and decreasing surface MHC-I molecules on infected CD4(+) cells send attacking cytotoxic CD8+ T-lymphocytes into apoptosis. Plays a role in optimizing the host cell environment for viral replication without causing cell death by apoptosis. Protects the infected cells from apoptosis in order to keep them alive until the next virus generation is ready to strike. Inhibits the Fas and TNFR-mediated death signals by blocking MAP3K5/ASK1. Decreases the half-life of TP53, protecting the infected cell against p53-mediated apoptosis. Inhibits the apoptotic signals regulated by the Bcl-2 family proteins through the formation of a Nef/PI3-kinase/PAK2 complex that leads to activation of PAK2 and induces phosphorylation of host BAD. Its function is as follows. Extracellular Nef protein targets CD4(+) T-lymphocytes for apoptosis by interacting with CXCR4 surface receptors. The chain is Protein Nef from Human immunodeficiency virus type 1 group M subtype B (isolate SF162) (HIV-1).